We begin with the raw amino-acid sequence, 869 residues long: Dynamin-3 (869 aa).

The region spanning 28 to 294 is the Dynamin-type G domain; it reads LLELPQIAVV…LTNHIRDTLP (267 aa). The segment at 38–45 is G1 motif; that stretch reads GGQSAGKS. 38–46 is a GTP binding site; the sequence is GGQSAGKSS. The interval 64–66 is G2 motif; it reads VTR. Residues 136-139 form a G3 motif region; the sequence is DLPG. The segment at 205-208 is G4 motif; it reads TKLD. 205–211 serves as a coordination point for GTP; sequence TKLDLMD. Residue Y231 is modified to Phosphotyrosine. Residues 235–238 are G5 motif; that stretch reads VNRS. 236–239 contacts GTP; the sequence is NRSQ. K299 carries the N6-acetyllysine modification. Residues 515 to 621 form the PH domain; sequence QGTNLPPSRQ…ACDSQEDVDS (107 aa). At Y603 the chain carries Phosphotyrosine. Residue K604 is modified to N6-acetyllysine. A GED domain is found at 659-750; the sequence is VETIRNLVDS…IIGDISTATV (92 aa). A disordered region spans residues 747–869; that stretch reads TATVSTPAPP…IRPLESSLLD (123 aa). Residues S769 and S773 each carry the phosphoserine modification. 2 stretches are compositionally biased toward pro residues: residues 797–822 and 832–855; these read PAIPSPGPHSGAPPVPFRPGPLPPFP and PQVPSRPTRAPPSVPSRRPPPSPT. Phosphoserine is present on S853.

This sequence belongs to the TRAFAC class dynamin-like GTPase superfamily. Dynamin/Fzo/YdjA family.

It is found in the cytoplasm. The protein resides in the cytoskeleton. The catalysed reaction is GTP + H2O = GDP + phosphate + H(+). Microtubule-associated force-producing protein involved in producing microtubule bundles and able to bind and hydrolyze GTP. Most probably involved in vesicular trafficking processes, in particular endocytosis. This Homo sapiens (Human) protein is Dynamin-3 (DNM3).